We begin with the raw amino-acid sequence, 95 residues long: Cell division protein FtsB (95 aa).

Residues 1 to 3 (MRW) lie on the Cytoplasmic side of the membrane. A helical transmembrane segment spans residues 4–21 (VLAGLTALLLWLQGLLWF). At 22 to 95 (GEGGLNDVRG…QIIEREDDAR (74 aa)) the chain is on the periplasmic side. Positions 26–76 (LNDVRGLSRSVEAQREEVDRLRQRNQALEAEVNDLKTGLEALEERARSELG) form a coiled coil.

The protein belongs to the FtsB family. As to quaternary structure, part of a complex composed of FtsB, FtsL and FtsQ.

The protein resides in the cell inner membrane. Essential cell division protein. May link together the upstream cell division proteins, which are predominantly cytoplasmic, with the downstream cell division proteins, which are predominantly periplasmic. The protein is Cell division protein FtsB of Alkalilimnicola ehrlichii (strain ATCC BAA-1101 / DSM 17681 / MLHE-1).